The following is a 122-amino-acid chain: Large ribosomal subunit protein bL12 (122 aa).

Belongs to the bacterial ribosomal protein bL12 family. Homodimer. Part of the ribosomal stalk of the 50S ribosomal subunit. Forms a multimeric L10(L12)X complex, where L10 forms an elongated spine to which 2 to 4 L12 dimers bind in a sequential fashion. Binds GTP-bound translation factors.

In terms of biological role, forms part of the ribosomal stalk which helps the ribosome interact with GTP-bound translation factors. Is thus essential for accurate translation. This Latilactobacillus sakei subsp. sakei (strain 23K) (Lactobacillus sakei subsp. sakei) protein is Large ribosomal subunit protein bL12.